We begin with the raw amino-acid sequence, 566 residues long: Good for full DBP5 activity protein 2 (566 aa).

The span at 1-16 shows a compositional bias: polar residues; sequence MQVQKMVRDNSNNGSD. Residues 1 to 41 form a disordered region; it reads MQVQKMVRDNSNNGSDKSVHWERRNNNGAGPRYRSRSGNTG.

Its function is as follows. High-copy suppressor of DBP5 mutation. The sequence is that of Good for full DBP5 activity protein 2 (GFD2) from Saccharomyces cerevisiae (strain ATCC 204508 / S288c) (Baker's yeast).